The sequence spans 93 residues: Small ribosomal subunit protein uS19c (93 aa).

This sequence belongs to the universal ribosomal protein uS19 family.

It is found in the plastid. Its subcellular location is the chloroplast. In terms of biological role, protein S19 forms a complex with S13 that binds strongly to the 16S ribosomal RNA. This Ipomoea purpurea (Common morning glory) protein is Small ribosomal subunit protein uS19c.